A 431-amino-acid chain; its full sequence is MMKFLTRMLSAFAVLFFAISTAQADDEVRIVIDEGVDGARPIAVVPFKTNGSVPADIAEIVTADLRNSGKFNPIPVSQMPQQPASASEVTPDAWAALGVDAIVVGQVTATGNGYNIAYQLVDTVGASGGAGAVLAQNSVTVGAKWIRYGAHTVSDEVFEKLTAIKGAFRTRIAYVVQKNGGSKPYEIRVADYDGFNQFIVNRSSQPIMSPAWSPDGKRLAYVSFENRKSQLVVQDLGSGARKVVASFQGHNGAPAFSPDGSRLAFASNKEGQLNIYVMGANGGQPTQLTSGSGNNTEPSWSPDGSSILFTSDRGGSPQVYRMSSSGGAASPVGGRGSAQISSDGKTLVMINGNNNVVKQDVTSGASEVLSTSFLGESPSLSPNGIMIIYSSTQGLGKVLQLVSADGRFKARLPGTDGQVKFPAWSPYLDKN.

The first 24 residues, 1–24 (MMKFLTRMLSAFAVLFFAISTAQA), serve as a signal peptide directing secretion. Positions 318 to 340 (QVYRMSSSGGAASPVGGRGSAQI) are disordered. Positions 323–332 (SSSGGAASPV) are enriched in low complexity.

It belongs to the TolB family. As to quaternary structure, the Tol-Pal system is composed of five core proteins: the inner membrane proteins TolA, TolQ and TolR, the periplasmic protein TolB and the outer membrane protein Pal. They form a network linking the inner and outer membranes and the peptidoglycan layer.

It is found in the periplasm. Functionally, part of the Tol-Pal system, which plays a role in outer membrane invagination during cell division and is important for maintaining outer membrane integrity. The sequence is that of Tol-Pal system protein TolB from Mannheimia succiniciproducens (strain KCTC 0769BP / MBEL55E).